The following is an 882-amino-acid chain: Alanine--tRNA ligase (882 aa).

The Zn(2+) site is built by His-564, His-568, Cys-666, and His-670.

Belongs to the class-II aminoacyl-tRNA synthetase family. Zn(2+) serves as cofactor.

It is found in the cytoplasm. The catalysed reaction is tRNA(Ala) + L-alanine + ATP = L-alanyl-tRNA(Ala) + AMP + diphosphate. Its function is as follows. Catalyzes the attachment of alanine to tRNA(Ala) in a two-step reaction: alanine is first activated by ATP to form Ala-AMP and then transferred to the acceptor end of tRNA(Ala). Also edits incorrectly charged Ser-tRNA(Ala) and Gly-tRNA(Ala) via its editing domain. The protein is Alanine--tRNA ligase of Rubrobacter xylanophilus (strain DSM 9941 / JCM 11954 / NBRC 16129 / PRD-1).